A 422-amino-acid chain; its full sequence is L-threonine dehydratase biosynthetic IlvA (422 aa).

Lysine 60 is subject to N6-(pyridoxal phosphate)lysine. Pyridoxal 5'-phosphate-binding positions include asparagine 87, 190 to 194, and serine 315; that span reads GGGGL. The ACT-like domain occupies 339 to 413; that stretch reads HYFIVNFPQR…KPFHYVEVNK (75 aa).

It belongs to the serine/threonine dehydratase family. Homotetramer. It depends on pyridoxal 5'-phosphate as a cofactor.

It catalyses the reaction L-threonine = 2-oxobutanoate + NH4(+). Its pathway is amino-acid biosynthesis; L-isoleucine biosynthesis; 2-oxobutanoate from L-threonine: step 1/1. Functionally, catalyzes the anaerobic formation of alpha-ketobutyrate and ammonia from threonine in a two-step reaction. The first step involved a dehydration of threonine and a production of enamine intermediates (aminocrotonate), which tautomerizes to its imine form (iminobutyrate). Both intermediates are unstable and short-lived. The second step is the nonenzymatic hydrolysis of the enamine/imine intermediates to form 2-ketobutyrate and free ammonia. In the low water environment of the cell, the second step is accelerated by RidA. This is L-threonine dehydratase biosynthetic IlvA (ilvA) from Bacillus subtilis (strain 168).